A 248-amino-acid polypeptide reads, in one-letter code: Metallo-beta-lactamase type 2 (248 aa).

Residues 1–21 form the signal peptide; the sequence is MKRLKGLLVLALGFTGLQVFG. Histidine 97, histidine 99, aspartate 101, histidine 160, and cysteine 179 together coordinate Zn(2+). Residue lysine 182 participates in substrate binding. Histidine 221 serves as a coordination point for Zn(2+).

It belongs to the metallo-beta-lactamase superfamily. Class-B beta-lactamase family. Monomer. Zn(2+) serves as cofactor.

Its subcellular location is the periplasm. It carries out the reaction a beta-lactam + H2O = a substituted beta-amino acid. In terms of biological role, confers resistance to the different beta-lactams antibiotics (penicillin, cephalosporin and carbapenem) via the hydrolysis of the beta-lactam ring. The polypeptide is Metallo-beta-lactamase type 2 (blaB6) (Elizabethkingia meningoseptica (Chryseobacterium meningosepticum)).